Here is a 142-residue protein sequence, read N- to C-terminus: Large ribosomal subunit protein uL23 (142 aa).

A Glycyl lysine isopeptide (Lys-Gly) (interchain with G-Cter in SUMO) cross-link involves residue lysine 61.

The protein belongs to the universal ribosomal protein uL23 family. In terms of assembly, component of the large ribosomal subunit (LSU). Mature yeast ribosomes consist of a small (40S) and a large (60S) subunit. The 40S small subunit contains 1 molecule of ribosomal RNA (18S rRNA) and 33 different proteins (encoded by 57 genes). The large 60S subunit contains 3 rRNA molecules (25S, 5.8S and 5S rRNA) and 46 different proteins (encoded by 81 genes). uL23 is associated with the polypeptide exit tunnel.

It localises to the cytoplasm. In terms of biological role, component of the ribosome, a large ribonucleoprotein complex responsible for the synthesis of proteins in the cell. The small ribosomal subunit (SSU) binds messenger RNAs (mRNAs) and translates the encoded message by selecting cognate aminoacyl-transfer RNA (tRNA) molecules. The large subunit (LSU) contains the ribosomal catalytic site termed the peptidyl transferase center (PTC), which catalyzes the formation of peptide bonds, thereby polymerizing the amino acids delivered by tRNAs into a polypeptide chain. The nascent polypeptides leave the ribosome through a tunnel in the LSU and interact with protein factors that function in enzymatic processing, targeting, and the membrane insertion of nascent chains at the exit of the ribosomal tunnel. uL23 is a major component of the universal docking site for these factors at the polypeptide exit tunnel. This chain is Large ribosomal subunit protein uL23, found in Saccharomyces cerevisiae (strain ATCC 204508 / S288c) (Baker's yeast).